A 40-amino-acid chain; its full sequence is Large ribosomal subunit protein bL36A (40 aa).

This sequence belongs to the bacterial ribosomal protein bL36 family.

In Renibacterium salmoninarum (strain ATCC 33209 / DSM 20767 / JCM 11484 / NBRC 15589 / NCIMB 2235), this protein is Large ribosomal subunit protein bL36A.